Reading from the N-terminus, the 199-residue chain is NAD(P)H quinone oxidoreductase PST3 (199 aa).

In terms of domain architecture, Flavodoxin-like spans 5–193; the sequence is VAIIIYSLYH…EIAFIQGKSF (189 aa). Residues 11 to 15 and 111 to 165 each bind FMN; these read SLYHH and IFVS…SPYG.

This sequence belongs to the WrbA family. Requires FMN as cofactor.

It localises to the cell membrane. The catalysed reaction is a quinone + NADH + H(+) = a quinol + NAD(+). It carries out the reaction a quinone + NADPH + H(+) = a quinol + NADP(+). In terms of biological role, flavodoxin-like protein (FLP) that plays a role in cell wall integrity, oxidative stress protection and virulence. FLPs act as NAD(P)H quinone oxidoreductases. Reduces ubiquinone (coenzyme Q), enabling it to serve as an antioxidant in the membrane. In Candida albicans (strain SC5314 / ATCC MYA-2876) (Yeast), this protein is NAD(P)H quinone oxidoreductase PST3.